Consider the following 345-residue polypeptide: Homeobox-leucine zipper protein HOX16 (345 aa).

Residues Leu-76–Gln-135 constitute a DNA-binding region (homeobox). The interval Lys-134–Lys-178 is leucine-zipper. The segment at Phe-220–Ser-241 is disordered.

This sequence belongs to the HD-ZIP homeobox family. Class I subfamily. Expressed in seedlings, stems, leaf sheaths and blades and panicles.

It localises to the nucleus. Functionally, probable transcription factor. This is Homeobox-leucine zipper protein HOX16 (HOX16) from Oryza sativa subsp. indica (Rice).